Consider the following 241-residue polypeptide: Small ribosomal subunit protein uS2 (241 aa).

The protein belongs to the universal ribosomal protein uS2 family.

In Citrobacter koseri (strain ATCC BAA-895 / CDC 4225-83 / SGSC4696), this protein is Small ribosomal subunit protein uS2.